Reading from the N-terminus, the 363-residue chain is Disease resistance protein RBA1 (363 aa).

In terms of domain architecture, TIR spans 12-175; sequence PVPKVFLSFR…EIVKEVERVL (164 aa). NAD(+) is bound by residues 21–26 and Gly53; that span reads RGEEIR. Residue Glu86 is part of the active site.

As to quaternary structure, homooligomer; homooligomerization is required for activity.

It is found in the cytoplasm. Its subcellular location is the nucleus. It localises to the nucleoplasm. It catalyses the reaction NAD(+) + H2O = ADP-D-ribose + nicotinamide + H(+). The enzyme catalyses NADP(+) + H2O = ADP-D-ribose 2'-phosphate + nicotinamide + H(+). Functionally, disease resistance (R) protein that specifically recognizes the HopBA1 type III effector protein from P.syringae, and triggers cell death. Acts as a NAD(+) hydrolase (NADase): in response to pathogen-recognition, catalyzes cleavage of NAD(+) into ADP-D-ribose (ADPR) and nicotinamide; NAD(+) cleavage triggering a defense system that promotes cell death. In addition to ADPR, also generates a cyclization variant of cyclic ADPR (cADPR), termed v-cADPR, for which the cyclizing bond is unknown. Also able to hydrolyze NADP(+), but not other NAD(+)-related molecules. This is Disease resistance protein RBA1 from Arabidopsis thaliana (Mouse-ear cress).